Consider the following 55-residue polypeptide: ATP synthase F(0) complex subunit 8 (55 aa).

The helical transmembrane segment at Phe10–Val32 threads the bilayer.

This sequence belongs to the ATPase protein 8 family. As to quaternary structure, component of the ATP synthase complex composed at least of ATP5F1A/subunit alpha, ATP5F1B/subunit beta, ATP5MC1/subunit c (homooctomer), MT-ATP6/subunit a, MT-ATP8/subunit 8, ATP5ME/subunit e, ATP5MF/subunit f, ATP5MG/subunit g, ATP5MK/subunit k, ATP5MJ/subunit j, ATP5F1C/subunit gamma, ATP5F1D/subunit delta, ATP5F1E/subunit epsilon, ATP5PF/subunit F6, ATP5PB/subunit b, ATP5PD/subunit d, ATP5PO/subunit OSCP. ATP synthase complex consists of a soluble F(1) head domain (subunits alpha(3) and beta(3)) - the catalytic core - and a membrane F(0) domain - the membrane proton channel (subunits c, a, 8, e, f, g, k and j). These two domains are linked by a central stalk (subunits gamma, delta, and epsilon) rotating inside the F1 region and a stationary peripheral stalk (subunits F6, b, d, and OSCP).

It localises to the mitochondrion membrane. Functionally, subunit 8, of the mitochondrial membrane ATP synthase complex (F(1)F(0) ATP synthase or Complex V) that produces ATP from ADP in the presence of a proton gradient across the membrane which is generated by electron transport complexes of the respiratory chain. ATP synthase complex consist of a soluble F(1) head domain - the catalytic core - and a membrane F(1) domain - the membrane proton channel. These two domains are linked by a central stalk rotating inside the F(1) region and a stationary peripheral stalk. During catalysis, ATP synthesis in the catalytic domain of F(1) is coupled via a rotary mechanism of the central stalk subunits to proton translocation. In vivo, can only synthesize ATP although its ATP hydrolase activity can be activated artificially in vitro. Part of the complex F(0) domain. In Loxigilla noctis (Lesser Antillean bullfinch), this protein is ATP synthase F(0) complex subunit 8.